Reading from the N-terminus, the 234-residue chain is Peroxisomal coenzyme A diphosphatase ndx-8 (234 aa).

Positions 27–162 (EQDAGVLILL…TFLIDEFYMV (136 aa)) constitute a Nudix hydrolase domain. Positions 66-90 (GGMMDDEDGQNVRRTAIREAYEEVG) match the Nudix box motif. Mg(2+) contacts are provided by Glu-84 and Glu-88. The chain crosses the membrane as a helical span at residues 170–190 (YPTTYGVTALMCIVVAIGLLG). Residues 232–234 (SKI) carry the Microbody targeting signal motif.

Belongs to the Nudix hydrolase family. The cofactor is Mg(2+). It depends on Mn(2+) as a cofactor.

It is found in the peroxisome membrane. Coenzyme A diphosphatase which mediates the cleavage of CoA into 3',5'-ADP and 4'-phosphopantetheine. The sequence is that of Peroxisomal coenzyme A diphosphatase ndx-8 (ndx-8) from Caenorhabditis elegans.